Consider the following 946-residue polypeptide: Bifunctional glutamine synthetase adenylyltransferase/adenylyl-removing enzyme (946 aa).

The segment at 1 to 440 is adenylyl removase; the sequence is MKPLSSPLQQ…VFNELIGDDE (440 aa). Positions 449–946 are adenylyl transferase; the sequence is SEQWRELWQD…ASWQKWLVEE (498 aa).

The protein belongs to the GlnE family. Mg(2+) is required as a cofactor.

It catalyses the reaction [glutamine synthetase]-O(4)-(5'-adenylyl)-L-tyrosine + phosphate = [glutamine synthetase]-L-tyrosine + ADP. It carries out the reaction [glutamine synthetase]-L-tyrosine + ATP = [glutamine synthetase]-O(4)-(5'-adenylyl)-L-tyrosine + diphosphate. Functionally, involved in the regulation of glutamine synthetase GlnA, a key enzyme in the process to assimilate ammonia. When cellular nitrogen levels are high, the C-terminal adenylyl transferase (AT) inactivates GlnA by covalent transfer of an adenylyl group from ATP to specific tyrosine residue of GlnA, thus reducing its activity. Conversely, when nitrogen levels are low, the N-terminal adenylyl removase (AR) activates GlnA by removing the adenylyl group by phosphorolysis, increasing its activity. The regulatory region of GlnE binds the signal transduction protein PII (GlnB) which indicates the nitrogen status of the cell. This chain is Bifunctional glutamine synthetase adenylyltransferase/adenylyl-removing enzyme, found in Escherichia coli O127:H6 (strain E2348/69 / EPEC).